A 363-amino-acid chain; its full sequence is Probable F-box protein At4g22165 (363 aa).

The F-box domain occupies 7–56; it reads PNTWSELPLDLLNLVFKRLSLVNFQRAKSVCSTRYSVSRQCVPERQIALL.

This is Probable F-box protein At4g22165 from Arabidopsis thaliana (Mouse-ear cress).